We begin with the raw amino-acid sequence, 200 residues long: Recombination protein RecR (200 aa).

The segment at 57-72 (CRQCRTLTEQELCPQC) adopts a C4-type zinc-finger fold. One can recognise a Toprim domain in the interval 80 to 175 (TQLCVVEGPV…TATRIAHGVP (96 aa)).

This sequence belongs to the RecR family.

Its function is as follows. May play a role in DNA repair. It seems to be involved in an RecBC-independent recombinational process of DNA repair. It may act with RecF and RecO. The protein is Recombination protein RecR of Pseudomonas entomophila (strain L48).